Here is a 269-residue protein sequence, read N- to C-terminus: Tryptophan synthase alpha chain (269 aa).

Residues Glu49 and Asp60 each act as proton acceptor in the active site.

The protein belongs to the TrpA family. In terms of assembly, tetramer of two alpha and two beta chains.

It carries out the reaction (1S,2R)-1-C-(indol-3-yl)glycerol 3-phosphate + L-serine = D-glyceraldehyde 3-phosphate + L-tryptophan + H2O. Its pathway is amino-acid biosynthesis; L-tryptophan biosynthesis; L-tryptophan from chorismate: step 5/5. In terms of biological role, the alpha subunit is responsible for the aldol cleavage of indoleglycerol phosphate to indole and glyceraldehyde 3-phosphate. The protein is Tryptophan synthase alpha chain of Histophilus somni (strain 2336) (Haemophilus somnus).